The sequence spans 351 residues: Dihydroorotate dehydrogenase (quinone) (351 aa).

Residues 61–65 (AGLDK) and Thr85 each bind FMN. Lys65 contacts substrate. A substrate-binding site is contributed by 110–114 (NRMGF). FMN is bound by residues Asn139 and Asn172. Substrate is bound at residue Asn172. Residue Ser175 is the Nucleophile of the active site. Residue Asn177 coordinates substrate. Residues Lys217 and Thr245 each coordinate FMN. 246 to 247 (NT) lines the substrate pocket. FMN-binding positions include Gly268, Gly297, and 318 to 319 (YS).

It belongs to the dihydroorotate dehydrogenase family. Type 2 subfamily. As to quaternary structure, monomer. Requires FMN as cofactor.

It is found in the cell membrane. The enzyme catalyses (S)-dihydroorotate + a quinone = orotate + a quinol. The protein operates within pyrimidine metabolism; UMP biosynthesis via de novo pathway; orotate from (S)-dihydroorotate (quinone route): step 1/1. Catalyzes the conversion of dihydroorotate to orotate with quinone as electron acceptor. This chain is Dihydroorotate dehydrogenase (quinone), found in Xanthomonas campestris pv. campestris (strain 8004).